Consider the following 330-residue polypeptide: Serine/threonine-protein phosphatase PP1-alpha catalytic subunit (330 aa).

N-acetylserine is present on Ser2. 2 positions are modified to phosphoserine: Ser2 and Ser22. Residues Asp64, His66, Asp92, and Asn124 each contribute to the Mn(2+) site. The Proton donor role is filled by His125. Residues His173 and His248 each contribute to the Mn(2+) site. The residue at position 305 (Lys305) is an N6-acetyllysine. Phosphotyrosine is present on Tyr306. The interval 306-330 (YGQFSGLNPGGRPITPPRNSAKAKK) is disordered. Thr320 carries the phosphothreonine modification. Ser325 carries the phosphoserine modification.

It belongs to the PPP phosphatase family. PP-1 subfamily. As to quaternary structure, PP1 comprises a catalytic subunit, PPP1CA, PPP1CB or PPP1CC, which is folded into its native form by inhibitor 2 and glycogen synthetase kinase 3, and then complexed to one or several targeting or regulatory subunits. PPP1R12A, PPP1R12B and PPP1R12C mediate binding to myosin. PPP1R3A (in skeletal muscle), PPP1R3B (in liver), PPP1R3C, PPP1R3D and PPP1R3F (in brain) mediate binding to glycogen. Interacts with PPP1R15A and PPP1R15B; the interactions mediate binding to EIF2S1. Part of a complex containing PPP1R15B, PP1 and NCK1/2. Interacts with PPP1R9A, PPP1R9B and PPP1R7. Interacts with YLPM1. Forms a complex with ILF2, ILF3, YLPM1, KHDRBS1, RBMX and NCOA5. Interacts with NOM1 and PPP1R8. Interacts with PPP1R16B. Interacts with RPSA only in the presence of PPP1R16B. Component of the PNUTS-PP1 phosphatase complex, composed of PPP1R10/PNUTS, TOX4, WDR82, and PPP1CA or PPP1CB or PPP1CC. Interacts with PPP1R10/PNUTS and PPP1R8. Interacts with WDR82 in the presence of PPP1R10/PNUTS. Interacts with PPP1R39. transition from mitosis into interphase. Interacts with TRIM28; the interaction dephosphorylates TRIM28 on 'Ser-824' and forms a complex at the p21 promoter site. Interacts with NEK2. Interacts with PHACTR4; which acts as an activator of PP1 activity. Interacts with FER; this promotes phosphorylation at Thr-320. Interacts with BTBD10. Interacts with KCTD20. Interacts with FOXP3. Interacts with CENPA. Interacts with ATG16L1. Found in a complex with PPP1CA, PPP1CC, SHC1 and PEAK1. Interacts with tensin TNS1. Interacts with SAXO4, PPP1R21, PPP1R26, PPP1R27, PPP1R35, PPP1R36, PPP1R37, SH3RF2, ELFN1 and ELFN2. Interacts with TPRN; the interaction results in inhibition of PPC1A phosphatase activity. Interacts with SKA1 (via C-terminus); the interaction is direct and required for the recruitment of PP1 to the kinetochore. Interacts with the KNL1 complex subunit KNL1; the interaction is direct and mutually exclusive with KNL1 binding to microtubules. Component of the SHOC2-MRAS-PP1c (SMP) complex consisting of SHOC2, GTP-bound M-Ras/MRAS and the catalytic subunit of protein phosphatase 1 (either PPP1CA, PPP1CB or PPP1CC). SHOC2 and PP1c preferably bind M-Ras/MRAS, but they also bind K-Ras/KRAS, N-Ras/NRAS and H-Ras/HRAS; these interactions are GTP-dependent and both SHOC2 and PP1c are required to form a stable complex. Interacts with SHOC2 in the absence of Ras GTPases. It depends on Mn(2+) as a cofactor. In terms of processing, phosphorylated. Dephosphorylated at Thr-320 in the presence of ionizing radiation.

Its subcellular location is the cytoplasm. It localises to the nucleus. It is found in the nucleoplasm. The protein resides in the nucleolus. It catalyses the reaction O-phospho-L-seryl-[protein] + H2O = L-seryl-[protein] + phosphate. The enzyme catalyses O-phospho-L-threonyl-[protein] + H2O = L-threonyl-[protein] + phosphate. Protein phosphatase that associates with over 200 regulatory proteins to form highly specific holoenzymes which dephosphorylate hundreds of biological targets. Protein phosphatase 1 (PP1) is essential for cell division, transcription elongation, and participates in the regulation of glycogen metabolism, muscle contractility and protein synthesis. Involved in regulation of ionic conductances and long-term synaptic plasticity. May play an important role in dephosphorylating substrates such as the postsynaptic density-associated Ca(2+)/calmodulin dependent protein kinase II. Catalytic component of the PNUTS-PP1 protein phosphatase complex, a protein phosphatase 1 (PP1) complex that promotes RNA polymerase II transcription pause-release, allowing transcription elongation: the PNUTS-PP1 complex mediates the release of RNA polymerase II from promoter-proximal region of genes by catalyzing dephosphorylation of proteins involved in transcription, such as AFF4, CDK9, MEPCE, INTS12, NCBP1, POLR2M/GDOWN1 and SUPT6H. The PNUTS-PP1 complex also regulates transcription termination by mediating dephosphorylation of SUPT5H in termination zones downstream of poly(A) sites, thereby promoting deceleration of RNA polymerase II transcription. PNUTS-PP1 complex is also involved in the response to replication stress by mediating dephosphorylation of POLR2A at 'Ser-5' of the CTD, promoting RNA polymerase II degradation. PNUTS-PP1 also plays a role in the control of chromatin structure and cell cycle progression during the transition from mitosis into interphase. Regulates NEK2 function in terms of kinase activity and centrosome number and splitting, both in the presence and absence of radiation-induced DNA damage. Regulator of neural tube and optic fissure closure, and enteric neural crest cell (ENCCs) migration during development. In balance with CSNK1D and CSNK1E, determines the circadian period length, through the regulation of the speed and rhythmicity of PER1 and PER2 phosphorylation. May dephosphorylate CSNK1D and CSNK1E. Dephosphorylates the 'Ser-418' residue of FOXP3 in regulatory T-cells (Treg) from patients with rheumatoid arthritis, thereby inactivating FOXP3 and rendering Treg cells functionally defective. Dephosphorylates CENPA. Dephosphorylates the 'Ser-139' residue of ATG16L1 causing dissociation of ATG12-ATG5-ATG16L1 complex, thereby inhibiting autophagy. Together with PPP1CC (PP1-gamma subunit), dephosphorylates IFIH1/MDA5 and RIG-I leading to their activation and a functional innate immune response. Core component of the SHOC2-MRAS-PP1c (SMP) holophosphatase complex that regulates the MAPK pathway activation. The SMP complex specifically dephosphorylates the inhibitory phosphorylation at 'Ser-259' of RAF1 kinase, 'Ser-365' of BRAF kinase and 'Ser-214' of ARAF kinase, stimulating their kinase activities. The SMP complex enhances the dephosphorylation activity and substrate specificity of PP1c. The chain is Serine/threonine-protein phosphatase PP1-alpha catalytic subunit (PPP1CA) from Canis lupus familiaris (Dog).